The sequence spans 373 residues: Peroxisomal biogenesis factor 3 (373 aa).

Topologically, residues methionine 1–lysine 15 are cytoplasmic. Residues methionine 1–alanine 45 are targeting to peroxisomes. The chain crosses the membrane as a helical span at residues cysteine 16–lysine 36. Over isoleucine 37–isoleucine 116 the chain is Peroxisomal. Residues valine 117 to isoleucine 140 traverse the membrane as a helical segment. An interaction with PEX19 region spans residues tyrosine 120–isoleucine 136. The Cytoplasmic segment spans residues tyrosine 141 to lysine 373.

Belongs to the peroxin-3 family. Interacts with PEX19.

The protein resides in the peroxisome membrane. In terms of biological role, involved in peroxisome biosynthesis and integrity. Assembles membrane vesicles before the matrix proteins are translocated. As a docking factor for PEX19, is necessary for the import of peroxisomal membrane proteins in the peroxisomes. This is Peroxisomal biogenesis factor 3 (PEX3) from Cricetulus longicaudatus (Long-tailed dwarf hamster).